Consider the following 464-residue polypeptide: DNA primase DnaG (464 aa).

One can recognise a Toprim domain in the interval 198–272; the sequence is DSIIVVEGRA…DVDYVARAPE (75 aa). Mg(2+)-binding residues include Glu204, Asp246, and Asp248. The segment covering 315–333 has biased composition (basic and acidic residues); sequence RESEGERQPRQVTKPEPEV. The disordered stretch occupies residues 315–351; sequence RESEGERQPRQVTKPEPEVVKAQPKAETPEEKREPAT.

The protein belongs to the archaeal DnaG primase family. In terms of assembly, forms a ternary complex with MCM helicase and DNA. Component of the archaeal exosome complex. The cofactor is Mg(2+).

The enzyme catalyses ssDNA + n NTP = ssDNA/pppN(pN)n-1 hybrid + (n-1) diphosphate.. In terms of biological role, RNA polymerase that catalyzes the synthesis of short RNA molecules used as primers for DNA polymerase during DNA replication. Also part of the exosome, which is a complex involved in RNA degradation. Acts as a poly(A)-binding protein that enhances the interaction between heteromeric, adenine-rich transcripts and the exosome. The sequence is that of DNA primase DnaG from Thermococcus kodakarensis (strain ATCC BAA-918 / JCM 12380 / KOD1) (Pyrococcus kodakaraensis (strain KOD1)).